The chain runs to 570 residues: Aspartyl aminopeptidase (570 aa).

Histidine 86 serves as a coordination point for Zn(2+). Histidine 160 contacts substrate. Aspartate 324 is a binding site for Zn(2+). Residue glutamate 379 coordinates substrate. Glutamate 380 and aspartate 434 together coordinate Zn(2+). Substrate-binding residues include aspartate 434, histidine 437, lysine 462, and tyrosine 469. Zn(2+) is bound at residue histidine 534.

This sequence belongs to the peptidase M18 family. In terms of assembly, homododecamer composed of homodimers and homotrimers that assemble into a tetrahedron shape to create a central tunnel containing the active sites. Homooctamer. Zn(2+) serves as cofactor.

It is found in the cytoplasm. The enzyme catalyses Release of an N-terminal aspartate or glutamate from a peptide, with a preference for aspartate.. Activated by Co(2+). Inhibited by high concentrations (&gt;1mM) of Zn(2+). Functionally, aminopeptidase which specifically catalyzes the removal of glutamic acid or aspartic acid residues from the N-terminus of peptides. May play a role in the final step of host hemoglobin catabolism, by cleaving hemoglobin-derived oligopeptides in the cytoplasm. The protein is Aspartyl aminopeptidase of Plasmodium falciparum (isolate 3D7).